Reading from the N-terminus, the 642-residue chain is Threonine--tRNA ligase (642 aa).

The TGS domain maps to Met-1–Thr-61. Residues Asp-243–Pro-534 are catalytic. Zn(2+) is bound by residues Cys-334, His-385, and His-511.

The protein belongs to the class-II aminoacyl-tRNA synthetase family. In terms of assembly, homodimer. Zn(2+) serves as cofactor.

The protein resides in the cytoplasm. The enzyme catalyses tRNA(Thr) + L-threonine + ATP = L-threonyl-tRNA(Thr) + AMP + diphosphate + H(+). Catalyzes the attachment of threonine to tRNA(Thr) in a two-step reaction: L-threonine is first activated by ATP to form Thr-AMP and then transferred to the acceptor end of tRNA(Thr). Also edits incorrectly charged L-seryl-tRNA(Thr). This is Threonine--tRNA ligase from Salmonella heidelberg (strain SL476).